The following is a 353-amino-acid chain: Protein RecA (353 aa).

Position 73–80 (glycine 73–threonine 80) interacts with ATP.

The protein belongs to the RecA family.

It is found in the cytoplasm. In terms of biological role, can catalyze the hydrolysis of ATP in the presence of single-stranded DNA, the ATP-dependent uptake of single-stranded DNA by duplex DNA, and the ATP-dependent hybridization of homologous single-stranded DNAs. It interacts with LexA causing its activation and leading to its autocatalytic cleavage. This chain is Protein RecA, found in Bordetella avium (strain 197N).